The following is a 127-amino-acid chain: Glycine cleavage system H protein (127 aa).

Residues 24-105 form the Lipoyl-binding domain; sequence TALVGITDFA…YGSGWMVKMK (82 aa). N6-lipoyllysine is present on Lys-65.

It belongs to the GcvH family. The glycine cleavage system is composed of four proteins: P, T, L and H. (R)-lipoate serves as cofactor.

The glycine cleavage system catalyzes the degradation of glycine. The H protein shuttles the methylamine group of glycine from the P protein to the T protein. This chain is Glycine cleavage system H protein, found in Chlorobium luteolum (strain DSM 273 / BCRC 81028 / 2530) (Pelodictyon luteolum).